We begin with the raw amino-acid sequence, 232 residues long: 2-C-methyl-D-erythritol 4-phosphate cytidylyltransferase (232 aa).

This sequence belongs to the IspD/TarI cytidylyltransferase family. IspD subfamily.

It carries out the reaction 2-C-methyl-D-erythritol 4-phosphate + CTP + H(+) = 4-CDP-2-C-methyl-D-erythritol + diphosphate. The protein operates within isoprenoid biosynthesis; isopentenyl diphosphate biosynthesis via DXP pathway; isopentenyl diphosphate from 1-deoxy-D-xylulose 5-phosphate: step 2/6. In terms of biological role, catalyzes the formation of 4-diphosphocytidyl-2-C-methyl-D-erythritol from CTP and 2-C-methyl-D-erythritol 4-phosphate (MEP). This Stenotrophomonas maltophilia (strain K279a) protein is 2-C-methyl-D-erythritol 4-phosphate cytidylyltransferase.